The primary structure comprises 89 residues: Small ribosomal subunit protein uS14A (89 aa).

Belongs to the universal ribosomal protein uS14 family. Part of the 30S ribosomal subunit. Contacts proteins S3 and S10.

Binds 16S rRNA, required for the assembly of 30S particles and may also be responsible for determining the conformation of the 16S rRNA at the A site. The sequence is that of Small ribosomal subunit protein uS14A from Lacticaseibacillus paracasei (strain ATCC 334 / BCRC 17002 / CCUG 31169 / CIP 107868 / KCTC 3260 / NRRL B-441) (Lactobacillus paracasei).